A 531-amino-acid polypeptide reads, in one-letter code: 2,3-bisphosphoglycerate-independent phosphoglycerate mutase (531 aa).

Residues D13 and S63 each contribute to the Mn(2+) site. The active-site Phosphoserine intermediate is the S63. Substrate contacts are provided by residues H124, 154–155 (RD), R187, R193, 261–264 (RPDR), and K342. Mn(2+)-binding residues include D420, H424, D462, H463, and H480.

It belongs to the BPG-independent phosphoglycerate mutase family. In terms of assembly, monomer. Mn(2+) is required as a cofactor.

The enzyme catalyses (2R)-2-phosphoglycerate = (2R)-3-phosphoglycerate. Its pathway is carbohydrate degradation; glycolysis; pyruvate from D-glyceraldehyde 3-phosphate: step 3/5. In terms of biological role, catalyzes the interconversion of 2-phosphoglycerate and 3-phosphoglycerate. This is 2,3-bisphosphoglycerate-independent phosphoglycerate mutase from Mycoplasma mycoides subsp. mycoides SC (strain CCUG 32753 / NCTC 10114 / PG1).